Here is a 645-residue protein sequence, read N- to C-terminus: 1-deoxy-D-xylulose-5-phosphate synthase (645 aa).

Thiamine diphosphate contacts are provided by residues His-83 and Gly-124–Ser-126. A Mg(2+)-binding site is contributed by Asp-155. Residues Gly-156 to Ser-157, Asn-184, Tyr-295, and Glu-376 each bind thiamine diphosphate. Asn-184 lines the Mg(2+) pocket.

Belongs to the transketolase family. DXPS subfamily. In terms of assembly, homodimer. Mg(2+) serves as cofactor. It depends on thiamine diphosphate as a cofactor.

The catalysed reaction is D-glyceraldehyde 3-phosphate + pyruvate + H(+) = 1-deoxy-D-xylulose 5-phosphate + CO2. The protein operates within metabolic intermediate biosynthesis; 1-deoxy-D-xylulose 5-phosphate biosynthesis; 1-deoxy-D-xylulose 5-phosphate from D-glyceraldehyde 3-phosphate and pyruvate: step 1/1. Its function is as follows. Catalyzes the acyloin condensation reaction between C atoms 2 and 3 of pyruvate and glyceraldehyde 3-phosphate to yield 1-deoxy-D-xylulose-5-phosphate (DXP). The polypeptide is 1-deoxy-D-xylulose-5-phosphate synthase (Desulfotalea psychrophila (strain LSv54 / DSM 12343)).